A 274-amino-acid chain; its full sequence is Tryptophan synthase alpha chain (274 aa).

Active-site proton acceptor residues include glutamate 49 and aspartate 60.

Belongs to the TrpA family. Tetramer of two alpha and two beta chains.

The enzyme catalyses (1S,2R)-1-C-(indol-3-yl)glycerol 3-phosphate + L-serine = D-glyceraldehyde 3-phosphate + L-tryptophan + H2O. It functions in the pathway amino-acid biosynthesis; L-tryptophan biosynthesis; L-tryptophan from chorismate: step 5/5. In terms of biological role, the alpha subunit is responsible for the aldol cleavage of indoleglycerol phosphate to indole and glyceraldehyde 3-phosphate. The sequence is that of Tryptophan synthase alpha chain from Zymomonas mobilis subsp. mobilis (strain ATCC 31821 / ZM4 / CP4).